We begin with the raw amino-acid sequence, 356 residues long: Formate-nitrite transporter (356 aa).

Residues 1–108 (MPREKPRADE…TKATYPIMKM (108 aa)) are Cytoplasmic-facing. Residues 109-129 (FSLSVLAGMLLSVGGLLSITI) form a helical membrane-spanning segment. Over 130–142 (GKGIPSSDIGIQK) the chain is Extracellular. Residues 143–163 (IVFGFFNSVGLNLVVLCGGEL) traverse the membrane as a helical segment. Over 164 to 182 (FTSNCAFLIPGFMEGAYSR) the chain is Cytoplasmic. Residues 183–203 (WLFFKTHFVVYFGNLVGSIFV) form a helical membrane-spanning segment. The Extracellular segment spans residues 204 to 237 (STYFGKLLGSFESPMYLSAVKQIGETKVAMNWGR). A helical transmembrane segment spans residues 238 to 258 (ALLSGIGCNWLVCCAVYFSAS). Residues 259-265 (AKDLLSK) are Cytoplasmic-facing. A helical transmembrane segment spans residues 266–286 (LVVISFLVLTFASLEFENCVG). Topologically, residues 287 to 310 (NMFLLSLSHMYGGNFTLGQWILNN) are extracellular. Residues 311 to 331 (LIPVSIGNFIGGTFLLGIPLW) form a helical membrane-spanning segment. At 332–356 (YVHVSNVYNIPFLDPLYQQSQAKTQ) the chain is on the cytoplasmic side.

The protein belongs to the FNT transporter (TC 1.A.16) family. Homopentamer.

It is found in the membrane. The catalysed reaction is (S)-lactate(in) + H(+)(in) = (S)-lactate(out) + H(+)(out). The enzyme catalyses formate(in) + H(+)(in) = formate(out) + H(+)(out). It carries out the reaction pyruvate(out) + H(+)(out) = pyruvate(in) + H(+)(in). It catalyses the reaction acetate(out) + H(+)(out) = acetate(in) + H(+)(in). Monocarboxylate-proton symporter; active in acidic-to-neutral pH range. Transports formate, acetate and L-lactate. In Entamoeba histolytica (strain ATCC 30459 / HM-1:IMSS / ABRM), this protein is Formate-nitrite transporter.